The sequence spans 361 residues: Peptide chain release factor 1 (361 aa).

N5-methylglutamine is present on glutamine 238.

This sequence belongs to the prokaryotic/mitochondrial release factor family. Methylated by PrmC. Methylation increases the termination efficiency of RF1.

Its subcellular location is the cytoplasm. In terms of biological role, peptide chain release factor 1 directs the termination of translation in response to the peptide chain termination codons UAG and UAA. The protein is Peptide chain release factor 1 of Mesomycoplasma hyopneumoniae (strain J / ATCC 25934 / NCTC 10110) (Mycoplasma hyopneumoniae).